Consider the following 2082-residue polypeptide: Probable ATP-dependent helicase PF08_0048 (2082 aa).

The HSA domain occupies 66–138 (KIVEPAKTPE…EEKRLKLYSK (73 aa)). A compositionally biased stretch (low complexity) spans 209–221 (NNSEIVNNNASSV). Disordered regions lie at residues 209 to 234 (NNSE…DDLT) and 301 to 470 (NVIE…SPTR). 2 stretches are compositionally biased toward basic and acidic residues: residues 419 to 448 (NSDH…HIDN) and 455 to 465 (TGEDYKSDKEN). A coiled-coil region spans residues 476-531 (KKEKYDEYDTKLKIEKREEENKNYEKDEHEYESDNYDKEKINKKKELILLKNDIEN). Residues 532 to 641 (DSDETSEHIK…KNDSDDNDDI (110 aa)) are disordered. The segment covering 536-545 (TSEHIKRDSR) has biased composition (basic and acidic residues). The segment covering 579–598 (DNNNSENDNNNDNNNDNNND) has biased composition (low complexity). Residues 599-627 (NNDDNNDDNNDDNNDDNNDDNNDDNNDDN) show a composition bias toward acidic residues. The Helicase ATP-binding domain occupies 674-839 (LYLYKNNING…WSLLHFLMPN (166 aa)). Residue 687–694 (DEMGLGKT) participates in ATP binding. The short motif at 790 to 793 (DEAH) is the DEAH box element. A disordered region spans residues 1199–1255 (EQNNNNSKDNNNNIDNNNNIDNNNNIDNNNNIDNNNNIDNNNNNIDNNNNIDNHHNN). A Helicase C-terminal domain is found at 1772–1922 (ALEKLLSKCK…NICINMGNFN (151 aa)). A coiled-coil region spans residues 1972–2060 (EQVENKDKMN…DEMRMKIEIE (89 aa)).

This sequence belongs to the SNF2/RAD54 helicase family. SWR1 subfamily. As to quaternary structure, component of a chromatin-remodeling complex.

It localises to the nucleus. Its function is as follows. Catalytic component of a chromatin remodeling complex. The chain is Probable ATP-dependent helicase PF08_0048 from Plasmodium falciparum (isolate 3D7).